The chain runs to 634 residues: 1-deoxy-D-xylulose-5-phosphate synthase (634 aa).

Thiamine diphosphate-binding positions include H72 and 113–115; that span reads GHS. D144 contributes to the Mg(2+) binding site. Residues 145-146, N173, Y284, and E367 each bind thiamine diphosphate; that span reads GA. N173 is a binding site for Mg(2+).

Belongs to the transketolase family. DXPS subfamily. In terms of assembly, homodimer. Requires Mg(2+) as cofactor. The cofactor is thiamine diphosphate.

It catalyses the reaction D-glyceraldehyde 3-phosphate + pyruvate + H(+) = 1-deoxy-D-xylulose 5-phosphate + CO2. The protein operates within metabolic intermediate biosynthesis; 1-deoxy-D-xylulose 5-phosphate biosynthesis; 1-deoxy-D-xylulose 5-phosphate from D-glyceraldehyde 3-phosphate and pyruvate: step 1/1. Catalyzes the acyloin condensation reaction between C atoms 2 and 3 of pyruvate and glyceraldehyde 3-phosphate to yield 1-deoxy-D-xylulose-5-phosphate (DXP). This Listeria welshimeri serovar 6b (strain ATCC 35897 / DSM 20650 / CCUG 15529 / CIP 8149 / NCTC 11857 / SLCC 5334 / V8) protein is 1-deoxy-D-xylulose-5-phosphate synthase.